A 54-amino-acid chain; its full sequence is UPF0391 membrane protein pRL90066 (54 aa).

Helical transmembrane passes span 5-25 and 28-48; these read ALVFLVVALIAGVLGFGGIAG and ASIAQVLFFIFLVLFVVSLVM.

It belongs to the UPF0391 family.

It localises to the cell membrane. In Rhizobium johnstonii (strain DSM 114642 / LMG 32736 / 3841) (Rhizobium leguminosarum bv. viciae), this protein is UPF0391 membrane protein pRL90066.